The primary structure comprises 1161 residues: PAN2-PAN3 deadenylation complex catalytic subunit pan2 (1161 aa).

WD repeat units follow at residues Gly-20–Ser-59 and Ala-276–Glu-315. The tract at residues Met-316–Asp-452 is linker. In terms of domain architecture, USP spans Asp-453–Lys-822. One can recognise an Exonuclease domain in the interval Val-871 to Leu-1049. Residues Asp-874, Glu-876, Asp-983, and Asp-1042 each coordinate a divalent metal cation. The stretch at Asn-1009–Gly-1060 is one WD 4 repeat. The disordered stretch occupies residues Arg-1092 to Lys-1161. Polar residues predominate over residues Val-1097–Thr-1110. Positions Ala-1116–Pro-1129 are enriched in low complexity. Residues Thr-1145–Phe-1155 are compositionally biased toward gly residues.

Belongs to the peptidase C19 family. PAN2 subfamily. As to quaternary structure, forms a heterotrimer with an asymmetric homodimer of the regulatory subunit pan3 to form the poly(A)-nuclease (PAN) deadenylation complex. A divalent metal cation is required as a cofactor.

It is found in the cytoplasm. The enzyme catalyses Exonucleolytic cleavage of poly(A) to 5'-AMP.. With respect to regulation, positively regulated by the regulatory subunit pan3. Functionally, catalytic subunit of the poly(A)-nuclease (PAN) deadenylation complex, one of two cytoplasmic mRNA deadenylases involved in mRNA turnover. PAN specifically shortens poly(A) tails of RNA and the activity is stimulated by poly(A)-binding protein pab1. PAN deadenylation is followed by rapid degradation of the shortened mRNA tails by the CCR4-NOT complex. Deadenylated mRNAs are then degraded by two alternative mechanisms, namely exosome-mediated 3'-5' exonucleolytic degradation, or deadenylation-dependent mRNA decaping and subsequent 5'-3' exonucleolytic degradation by xrn1. May also be involved in post-transcriptional maturation of mRNA poly(A) tails. The sequence is that of PAN2-PAN3 deadenylation complex catalytic subunit pan2 from Neosartorya fischeri (strain ATCC 1020 / DSM 3700 / CBS 544.65 / FGSC A1164 / JCM 1740 / NRRL 181 / WB 181) (Aspergillus fischerianus).